The chain runs to 323 residues: Acetyl-coenzyme A carboxylase carboxyl transferase subunit alpha (323 aa).

The CoA carboxyltransferase C-terminal domain maps to 39–293 (RLSKKSQQLT…RRALADSLRQ (255 aa)).

Belongs to the AccA family. In terms of assembly, acetyl-CoA carboxylase is a heterohexamer composed of biotin carboxyl carrier protein (AccB), biotin carboxylase (AccC) and two subunits each of ACCase subunit alpha (AccA) and ACCase subunit beta (AccD).

The protein resides in the cytoplasm. The enzyme catalyses N(6)-carboxybiotinyl-L-lysyl-[protein] + acetyl-CoA = N(6)-biotinyl-L-lysyl-[protein] + malonyl-CoA. It functions in the pathway lipid metabolism; malonyl-CoA biosynthesis; malonyl-CoA from acetyl-CoA: step 1/1. Component of the acetyl coenzyme A carboxylase (ACC) complex. First, biotin carboxylase catalyzes the carboxylation of biotin on its carrier protein (BCCP) and then the CO(2) group is transferred by the carboxyltransferase to acetyl-CoA to form malonyl-CoA. This Paraburkholderia phytofirmans (strain DSM 17436 / LMG 22146 / PsJN) (Burkholderia phytofirmans) protein is Acetyl-coenzyme A carboxylase carboxyl transferase subunit alpha.